Here is a 489-residue protein sequence, read N- to C-terminus: MAIDLRPFIPFGRGALSQATDPFRAAVEFTLMPMLITNPHLPDNPIVFANPAFLKLTGYEADEVMGRNCRFLQGHGTDPAHVRAIKSAIAAEKPIDIDIINYKKSGEAFWNRLHISPVHNANGRLQHFVSSQLDVTLELSRLVELEKERKTLSIETARSKDQLDYIVEVANIGFWTREFYSGKMTCSAECRRIYGFTPDEPVHFDTILDLVVLEDRMTVVQKAHQAVTGEPYSIEYRIVTRLGETRWLETRAKALTGENPLVLGIVQDVTERKKAEANKALVSREIAHRFKNSMAMVQSIANQTLRNTYDPEQANRLFSERLRALSQAHDMLLKENWAGATIQQICATALAPFNSTFANRIHMSGPHLLVSDRVTVALSLAFYELATNAVKYGALSNEKGVINITWAIMEDKGEKKFHMRWAESRGPEVMQPARRGFGQRLLHSVLAEELKAKCDVEFAASGLLIDVLAPITPEVFPGMGHNVPEQRIA.

Positions 19–93 (ATDPFRAAVE…AIKSAIAAEK (75 aa)) constitute a PAS domain. Position 69 is an S-4a-FMN cysteine (Cys-69). PAC domains lie at 93–147 (KPID…ELEK) and 232–281 (YSIE…NKAL). The tract at residues 259–341 (NPLVLGIVQD…LLKENWAGAT (83 aa)) is HWE histidine kinase domain. Residue His-288 is modified to Phosphohistidine; by autocatalysis.

In terms of processing, FMN binds covalently to cysteine after exposure to blue light and this bond is spontaneously broken in the dark.

It carries out the reaction ATP + protein L-histidine = ADP + protein N-phospho-L-histidine.. Functionally, photosensitive kinase that is involved in increased bacterial virulence upon exposure to light. Once ejected from an infected animal host, sunlight acts as an environmental signal that increases the virulence of the bacterium, preparing it for infection of the next host. This photoreceptor protein is directly related to the bacterium's survival and replication within host macrophages, as it is required for optimal replication of bacteria inside macrophages. The chain is Blue-light-activated histidine kinase from Brucella abortus (strain 2308).